The chain runs to 299 residues: GTPase Era (299 aa).

The Era-type G domain maps to 8–176; the sequence is RCGYVAIVGR…EKLVGERLPE (169 aa). Positions 16–23 are G1; sequence GRPNVGKS. 16–23 provides a ligand contact to GTP; sequence GRPNVGKS. The tract at residues 42–46 is G2; sequence QTTRH. The tract at residues 63 to 66 is G3; that stretch reads DTPG. Residues 63 to 67 and 125 to 128 contribute to the GTP site; these read DTPGL and NKAD. A G4 region spans residues 125–128; that stretch reads NKAD. The G5 stretch occupies residues 155 to 157; that stretch reads ISA. Positions 199 to 283 constitute a KH type-2 domain; that stretch reads IREKIMRQLG…MLNLWVKVKG (85 aa).

The protein belongs to the TRAFAC class TrmE-Era-EngA-EngB-Septin-like GTPase superfamily. Era GTPase family. As to quaternary structure, monomer.

Its subcellular location is the cytoplasm. The protein resides in the cell inner membrane. Functionally, an essential GTPase that binds both GDP and GTP, with rapid nucleotide exchange. Plays a role in 16S rRNA processing and 30S ribosomal subunit biogenesis and possibly also in cell cycle regulation and energy metabolism. This is GTPase Era from Ectopseudomonas mendocina (strain ymp) (Pseudomonas mendocina).